The following is a 1285-amino-acid chain: Tat-binding homolog 7 (1285 aa).

Disordered stretches follow at residues M1–R95, M121–R173, G224–Q243, and Q258–R359. Composition is skewed to acidic residues over residues E226 to E237 and Q258 to E270. Over residues N311 to R325 the composition is skewed to basic residues. G446–T453 serves as a coordination point for ATP. The Bromo domain occupies A928–M1032. Residues E1100–E1196 are disordered. Residues K1136–K1149 are compositionally biased toward basic residues. A compositionally biased stretch (acidic residues) spans P1155–D1175.

It belongs to the AAA ATPase family.

Its function is as follows. Thought to form a complex that enhances transcription from repetitive DNA sequences by modulating chromatin structure. The sequence is that of Tat-binding homolog 7 from Caenorhabditis briggsae.